A 401-amino-acid polypeptide reads, in one-letter code: Probable 2,3-bisphosphoglycerate-independent phosphoglycerate mutase (401 aa).

This sequence belongs to the BPG-independent phosphoglycerate mutase family. A-PGAM subfamily.

It catalyses the reaction (2R)-2-phosphoglycerate = (2R)-3-phosphoglycerate. It functions in the pathway carbohydrate degradation; glycolysis; pyruvate from D-glyceraldehyde 3-phosphate: step 3/5. Catalyzes the interconversion of 2-phosphoglycerate and 3-phosphoglycerate. The protein is Probable 2,3-bisphosphoglycerate-independent phosphoglycerate mutase of Thermotoga neapolitana (strain ATCC 49049 / DSM 4359 / NBRC 107923 / NS-E).